A 1004-amino-acid polypeptide reads, in one-letter code: UPF0182 protein Noca_1530 (1004 aa).

Positions 1–20 (MSELFDEAPRDPGPPARSGS) are disordered. 7 helical membrane-spanning segments follow: residues 26–46 (LIVTAVVLVIGFLGLSTFAGI), 71–91 (VLFFLFGAGMALVVGVNIYLA), 120–140 (TWLLVGVALVLGAFAGSSAIG), 183–203 (MAVLVVALIAAAVVHYLYGGI), 212–232 (LSGAAQAQISVLLGFFVLAKA), 261–281 (VLPAKNILLGISIICAVLFFV), and 293–313 (VGLALLAVSAILLGLIWPGIV). Disordered stretches follow at residues 899–924 (GVSTGPGTQPPDTGQPGDNENPPPAT) and 974–1004 (LGQKRGSAGQPSGSPSGSASSSPSESPSPSS). Low complexity-rich tracts occupy residues 903–916 (GPGTQPPDTGQPGD) and 979–1004 (GSAGQPSGSPSGSASSSPSESPSPSS).

The protein belongs to the UPF0182 family.

It localises to the cell membrane. This chain is UPF0182 protein Noca_1530, found in Nocardioides sp. (strain ATCC BAA-499 / JS614).